A 192-amino-acid chain; its full sequence is Orotate phosphoribosyltransferase (192 aa).

116 to 124 (EDIVTTGLS) is a 5-phospho-alpha-D-ribose 1-diphosphate binding site. Orotate contacts are provided by threonine 120 and arginine 148.

The protein belongs to the purine/pyrimidine phosphoribosyltransferase family. PyrE subfamily. Homodimer. Mg(2+) serves as cofactor.

It carries out the reaction orotidine 5'-phosphate + diphosphate = orotate + 5-phospho-alpha-D-ribose 1-diphosphate. It participates in pyrimidine metabolism; UMP biosynthesis via de novo pathway; UMP from orotate: step 1/2. Functionally, catalyzes the transfer of a ribosyl phosphate group from 5-phosphoribose 1-diphosphate to orotate, leading to the formation of orotidine monophosphate (OMP). This chain is Orotate phosphoribosyltransferase, found in Bartonella henselae (strain ATCC 49882 / DSM 28221 / CCUG 30454 / Houston 1) (Rochalimaea henselae).